Consider the following 63-residue polypeptide: Protein BP4A (63 aa).

As to expression, pollen specific.

This chain is Protein BP4A (BP4A), found in Brassica napus (Rape).